Here is a 142-residue protein sequence, read N- to C-terminus: Hemoglobin subunit alpha (142 aa).

Residues 2–142 (VLSAADKGNV…VSTVLTSKYR (141 aa)) form the Globin domain. At S4 the chain carries Phosphoserine. K8 and K12 each carry N6-succinyllysine. N6-acetyllysine; alternate is present on K17. K17 carries the N6-succinyllysine; alternate modification. A Phosphotyrosine modification is found at Y25. Phosphoserine is present on S36. K41 carries the N6-succinyllysine modification. A Phosphoserine modification is found at S50. Residue H59 participates in O2 binding. H88 is a heme b binding site. S103 carries the post-translational modification Phosphoserine. At T109 the chain carries Phosphothreonine. Position 125 is a phosphoserine (S125). A phosphothreonine mark is found at T135 and T138. S139 is subject to Phosphoserine.

It belongs to the globin family. In terms of assembly, heterotetramer of two alpha chains and two beta chains. In terms of tissue distribution, red blood cells.

Involved in oxygen transport from the lung to the various peripheral tissues. In terms of biological role, hemopressin acts as an antagonist peptide of the cannabinoid receptor CNR1. Hemopressin-binding efficiently blocks cannabinoid receptor CNR1 and subsequent signaling. The sequence is that of Hemoglobin subunit alpha (HBA) from Bos taurus (Bovine).